The primary structure comprises 170 residues: Glycine cleavage system H protein, mitochondrial (170 aa).

Residues Met-1–Leu-45 constitute a mitochondrion transit peptide. One can recognise a Lipoyl-binding domain in the interval Ile-63–Thr-145. Lys-104 is subject to N6-lipoyllysine.

This sequence belongs to the GcvH family. The glycine cleavage system is composed of four proteins: P (GLDC), T (GCST), L (DLD) and H (GCSH). Interacts with GLDC. The cofactor is (R)-lipoate.

The protein resides in the mitochondrion. The glycine cleavage system catalyzes the degradation of glycine. The H protein (GCSH) shuttles the methylamine group of glycine from the P protein (GLDC) to the T protein (GCST). Has a pivotal role in the lipoylation of enzymes involved in cellular energetics such as the mitochondrial dihydrolipoyllysine-residue acetyltransferase component of pyruvate dehydrogenase complex (DLAT), and the mitochondrial dihydrolipoyllysine-residue succinyltransferase component of 2-oxoglutarate dehydrogenase complex (DLST). This is Glycine cleavage system H protein, mitochondrial from Rattus norvegicus (Rat).